A 177-amino-acid chain; its full sequence is Large ribosomal subunit protein uL6 (177 aa).

It belongs to the universal ribosomal protein uL6 family. As to quaternary structure, part of the 50S ribosomal subunit.

Its function is as follows. This protein binds to the 23S rRNA, and is important in its secondary structure. It is located near the subunit interface in the base of the L7/L12 stalk, and near the tRNA binding site of the peptidyltransferase center. This chain is Large ribosomal subunit protein uL6, found in Actinobacillus succinogenes (strain ATCC 55618 / DSM 22257 / CCUG 43843 / 130Z).